A 257-amino-acid polypeptide reads, in one-letter code: Type III pantothenate kinase (257 aa).

Position 6-13 (6-13 (DVGNTNTV)) interacts with ATP. Substrate-binding positions include Tyr-102 and 109 to 112 (GADR). Residue Asp-111 is the Proton acceptor of the active site. Asp-131 provides a ligand contact to K(+). Thr-134 is a binding site for ATP. Thr-186 lines the substrate pocket.

It belongs to the type III pantothenate kinase family. In terms of assembly, homodimer. Requires NH4(+) as cofactor. K(+) serves as cofactor.

It is found in the cytoplasm. The enzyme catalyses (R)-pantothenate + ATP = (R)-4'-phosphopantothenate + ADP + H(+). The protein operates within cofactor biosynthesis; coenzyme A biosynthesis; CoA from (R)-pantothenate: step 1/5. In terms of biological role, catalyzes the phosphorylation of pantothenate (Pan), the first step in CoA biosynthesis. The protein is Type III pantothenate kinase of Leptospira borgpetersenii serovar Hardjo-bovis (strain JB197).